The primary structure comprises 227 residues: Cytochrome c oxidase subunit 2 (227 aa).

Residues 1-14 (MAHPVQLGFQDAAS) lie on the Mitochondrial intermembrane side of the membrane. The helical transmembrane segment at 15 to 45 (PIMEELLYFHDHTLMIMFLISSLVLYIISLM) threads the bilayer. The Mitochondrial matrix segment spans residues 46 to 59 (LTTKLTHTSTMDAQ). The helical transmembrane segment at 60 to 87 (EVETVWTILPAAILILIALPSLRILYMM) threads the bilayer. The Mitochondrial intermembrane segment spans residues 88 to 227 (DEITSPSLTL…HFEEWLLFTL (140 aa)). 6 residues coordinate Cu cation: His161, Cys196, Glu198, Cys200, His204, and Met207. Glu198 provides a ligand contact to Mg(2+).

The protein belongs to the cytochrome c oxidase subunit 2 family. Component of the cytochrome c oxidase (complex IV, CIV), a multisubunit enzyme composed of 14 subunits. The complex is composed of a catalytic core of 3 subunits MT-CO1, MT-CO2 and MT-CO3, encoded in the mitochondrial DNA, and 11 supernumerary subunits COX4I, COX5A, COX5B, COX6A, COX6B, COX6C, COX7A, COX7B, COX7C, COX8 and NDUFA4, which are encoded in the nuclear genome. The complex exists as a monomer or a dimer and forms supercomplexes (SCs) in the inner mitochondrial membrane with NADH-ubiquinone oxidoreductase (complex I, CI) and ubiquinol-cytochrome c oxidoreductase (cytochrome b-c1 complex, complex III, CIII), resulting in different assemblies (supercomplex SCI(1)III(2)IV(1) and megacomplex MCI(2)III(2)IV(2)). Found in a complex with TMEM177, COA6, COX18, COX20, SCO1 and SCO2. Interacts with TMEM177 in a COX20-dependent manner. Interacts with COX20. Interacts with COX16. Cu cation is required as a cofactor.

It localises to the mitochondrion inner membrane. It catalyses the reaction 4 Fe(II)-[cytochrome c] + O2 + 8 H(+)(in) = 4 Fe(III)-[cytochrome c] + 2 H2O + 4 H(+)(out). Component of the cytochrome c oxidase, the last enzyme in the mitochondrial electron transport chain which drives oxidative phosphorylation. The respiratory chain contains 3 multisubunit complexes succinate dehydrogenase (complex II, CII), ubiquinol-cytochrome c oxidoreductase (cytochrome b-c1 complex, complex III, CIII) and cytochrome c oxidase (complex IV, CIV), that cooperate to transfer electrons derived from NADH and succinate to molecular oxygen, creating an electrochemical gradient over the inner membrane that drives transmembrane transport and the ATP synthase. Cytochrome c oxidase is the component of the respiratory chain that catalyzes the reduction of oxygen to water. Electrons originating from reduced cytochrome c in the intermembrane space (IMS) are transferred via the dinuclear copper A center (CU(A)) of subunit 2 and heme A of subunit 1 to the active site in subunit 1, a binuclear center (BNC) formed by heme A3 and copper B (CU(B)). The BNC reduces molecular oxygen to 2 water molecules using 4 electrons from cytochrome c in the IMS and 4 protons from the mitochondrial matrix. In Varecia variegata (Black-and-white ruffed lemur), this protein is Cytochrome c oxidase subunit 2 (MT-CO2).